Here is a 277-residue protein sequence, read N- to C-terminus: Ribosomal RNA small subunit methyltransferase A (277 aa).

6 residues coordinate S-adenosyl-L-methionine: Asn-23, Leu-25, Gly-50, Glu-75, Asp-98, and Asn-121.

This sequence belongs to the class I-like SAM-binding methyltransferase superfamily. rRNA adenine N(6)-methyltransferase family. RsmA subfamily.

It is found in the cytoplasm. It catalyses the reaction adenosine(1518)/adenosine(1519) in 16S rRNA + 4 S-adenosyl-L-methionine = N(6)-dimethyladenosine(1518)/N(6)-dimethyladenosine(1519) in 16S rRNA + 4 S-adenosyl-L-homocysteine + 4 H(+). Specifically dimethylates two adjacent adenosines (A1518 and A1519) in the loop of a conserved hairpin near the 3'-end of 16S rRNA in the 30S particle. May play a critical role in biogenesis of 30S subunits. This Paraburkholderia xenovorans (strain LB400) protein is Ribosomal RNA small subunit methyltransferase A.